Here is a 173-residue protein sequence, read N- to C-terminus: Calmodulin-like protein 11 (173 aa).

Low complexity predominate over residues 1–26 (MEEIQQQQQQQQQQQQQQQQQQQQQQ). The disordered stretch occupies residues 1-27 (MEEIQQQQQQQQQQQQQQQQQQQQQQE). 4 consecutive EF-hand domains span residues 31–66 (EQIMEFKEAFCLFDKDGDGCITADELATVIRSLDQN), 67–102 (PTEQELQDMITEIDSDGNGTIEFSEFLNLMANQLQE), 104–139 (DADEELKEAFKVFDKDQNGYISASELRHVMINLGEK), and 140–173 (LTDEEVDQMIKEADLDGDGQVNYDEFVRMMMING). Ca(2+) contacts are provided by Asp-44, Asp-46, Asp-48, Cys-50, Glu-55, Asp-80, Asp-82, Asn-84, Thr-86, Glu-91, Asp-117, Asp-119, Asn-121, Tyr-123, Glu-128, Asp-153, Asp-155, Asp-157, Gln-159, and Glu-164.

The protein belongs to the calmodulin family.

Functionally, potential calcium sensor. The chain is Calmodulin-like protein 11 (CML11) from Arabidopsis thaliana (Mouse-ear cress).